Consider the following 229-residue polypeptide: ATP-dependent Clp protease proteolytic subunit (229 aa).

The Nucleophile role is filled by Ser-101. His-126 is an active-site residue.

The protein belongs to the peptidase S14 family. As to quaternary structure, component of the chloroplastic Clp protease core complex.

The protein localises to the plastid. It localises to the chloroplast stroma. It carries out the reaction Hydrolysis of proteins to small peptides in the presence of ATP and magnesium. alpha-casein is the usual test substrate. In the absence of ATP, only oligopeptides shorter than five residues are hydrolyzed (such as succinyl-Leu-Tyr-|-NHMec, and Leu-Tyr-Leu-|-Tyr-Trp, in which cleavage of the -Tyr-|-Leu- and -Tyr-|-Trp bonds also occurs).. Its function is as follows. Cleaves peptides in various proteins in a process that requires ATP hydrolysis. Has a chymotrypsin-like activity. Plays a major role in the degradation of misfolded proteins. This chain is ATP-dependent Clp protease proteolytic subunit, found in Mesostigma viride (Green alga).